Consider the following 798-residue polypeptide: MASLSTMHLINHSPASRRRIMSAAAAAAAKLHLPECFTITKSAWMNNTENLTLNYQLNHKKISKVAGINRVATVDAPQVHDQDDSTENQGHDAVNNIEDPIEYIRTLLRTTGDGRISVSPYDTAWVALIKDLNGRDAPEFPSSLEWIVRNQLDDGSWGDDKFFCVYDRLVNTIACVVALRSWNVHDDKLKRGVTYIKENVEKLRDGNVEHMTCGFEVVFTALLQRAKCLGIEDLPYDSPLIQEIYHSRQQKLNRIPMEMMHKVPTSLLFSLEGLENLEWERLLKLQSADGSFLTSPSSTAFAFMQTKDEKCYQFIKNTVETFNGGAPHTYPVDVFGRLWAVDRLQRLGISRFFESEIAECLAHIHKFWTEKGVFSGRESEFCDIDDTSMGIRLLRMHGYDVDPNVLRNFKKDDNFSCYGGQMIESPSPIYNLYRASQLRFPGEEILEDANKFAYNFLQEKLANNQILDKWVISKHLPDEIKLGMEMPWYATLPRVEARYYLQYYAGSGDVWIGKTLYRMPEISNDTYHELAKTDFKRCQAQHQFEWIYMQEWYESCNVEEFGISRKELLLAYFLATASIFELEKTKERIAWAKSQIISKMITSFFNNHNTSSEEKLAFLTDFRNSNGLNNTNMVLATLTQFLEGFNRYTSHQLKNAWGEWLAKLQQGEGDGAADAELLTNTLNICAGHIAFREEILSHNEYTTLSNLTSKICQQLSQIQNEKKMEIEGQMTAETSIKNKELEQDMQTLVKLVLGKSSGINRNIKKTFLAVAKTYYYRAYHDAQTIDTHMFKVLFEPVV.

A chloroplast-targeting transit peptide spans 1–72 (MASLSTMHLI…SKVAGINRVA (72 aa)). K251 serves as a coordination point for substrate. Mg(2+)-binding residues include D383 and D385. The DXDD motif motif lies at 383-386 (DIDD). Residue K469 participates in substrate binding.

This sequence belongs to the terpene synthase family. Tpsc subfamily. Requires Mg(2+) as cofactor. Highly expressed in roots, and, at low levels, in stems and leaves.

It localises to the plastid. The protein resides in the chloroplast. It catalyses the reaction (2E,6E,10E)-geranylgeranyl diphosphate = (+)-copalyl diphosphate. It participates in secondary metabolite biosynthesis; terpenoid biosynthesis. Involved in the biosynthesis of ent-kaurene diterpenoids natural products such as oridonin, miltiradiene, eriocalyxin B and nezukol, known to exhibit antitumor, anti-inflammatory and antibacterial activities. Catalyzes the conversion of (2E,6E,10E)-geranylgeranyl diphosphate (GGPP) to (+)-copalyl diphosphate ((+)-CPP). This is Copalyl diphosphate synthase 1, chloroplastic from Isodon rubescens (Rabdosia rubescens).